A 343-amino-acid chain; its full sequence is MQIGNFNTDKKVFIIAELSANHAGSLEMALKSIKAAKKAGADAIKIQTYTPDSLTLNSDKEDFIIKGGLWDKRKLYELYESAKTPYEWHSQIFETAQNEGILCFSSPFAKEDIEFLKRFDPIAYKIASFEANDENFVRLIAKEKKPTIVSTGIATEEELFKICEIFKEEKNPDLIFLKCTSAYPTAIEDMNLKGIVSLKEKFNVEVGLSDHSFGFLAPVMAVALGARVIEKHFMLDKSIESEDSKFSLDFDEFKAMVDAVRQAESALGDGKLDLDEKALKNRVFARSLYASKDIKKGEIFSEENVKSVRPSFGLHPKFYQELLGKKASKDIEFGDALKESDFR.

One can recognise an AFP-like domain in the interval 287 to 343 (SLYASKDIKKGEIFSEENVKSVRPSFGLHPKFYQELLGKKASKDIEFGDALKESDFR).

It belongs to the pseudaminic acid synthase family. A divalent metal cation serves as cofactor.

It carries out the reaction 2,4-diacetamido-2,4,6-trideoxy-beta-L-altrose + phosphoenolpyruvate + H2O = pseudaminate + phosphate. In terms of biological role, catalyzes the fifth step in the biosynthesis of pseudaminic acid, a sialic-acid-like sugar that is used to modify flagellin. Catalyzes the condensation of phosphoenolpyruvate with 2,4-diacetamido-2,4,6-trideoxy-beta-l-altropyranose, forming pseudaminic acid. This is Pseudaminic acid synthase (pseI) from Campylobacter jejuni subsp. jejuni serotype O:23/36 (strain 81-176).